Consider the following 118-residue polypeptide: UPF0231 protein PM0457 (118 aa).

The protein belongs to the UPF0231 family.

The chain is UPF0231 protein PM0457 from Pasteurella multocida (strain Pm70).